Reading from the N-terminus, the 315-residue chain is Tyrosine--tRNA ligase (315 aa).

Tyrosine 32 contacts L-tyrosine. Positions proline 37–histidine 45 match the 'HIGH' region motif. Residues tyrosine 152, glutamine 156, aspartate 159, and glutamine 174 each contribute to the L-tyrosine site. Positions lysine 208–serine 212 match the 'KMSKS' region motif. An ATP-binding site is contributed by serine 211.

Belongs to the class-I aminoacyl-tRNA synthetase family. TyrS type 3 subfamily. As to quaternary structure, homodimer.

It localises to the cytoplasm. It catalyses the reaction tRNA(Tyr) + L-tyrosine + ATP = L-tyrosyl-tRNA(Tyr) + AMP + diphosphate + H(+). In terms of biological role, catalyzes the attachment of tyrosine to tRNA(Tyr) in a two-step reaction: tyrosine is first activated by ATP to form Tyr-AMP and then transferred to the acceptor end of tRNA(Tyr). This chain is Tyrosine--tRNA ligase, found in Methanoculleus marisnigri (strain ATCC 35101 / DSM 1498 / JR1).